A 941-amino-acid chain; its full sequence is MQLFQNILVSIALLTQVVFAIEITENKVDRGTVTLNLSDITIYPGASWSIIDNAYTSFVGKLDVRDGAGLYISSTSHLLALQVSLTALLHSITNNGVVSFDSRISRTSSSYDLRGVSFTNNGEMYFAASGEFSSSTALTSASWTNTRLLSFYQNQRTSGTVSLGMPLGSITNNGQVCLNNQVYEQTTQIKGSGCFTANGDSTIYISNVLLAVSPKQNFYLTDKGSSMIVQAVSTTQTFNVYGFGEGNKIGLTIPLMGNLWNSAYAYDTTSGILTLRNLLLEQKFNIGTGYDPSKFQVVTDSGSGIPSTILGSVAYYGRVPERTLPKSCQIPCKPIPEAPGTTPTQYTTTITKTNTAGNTVTESGVVNVSTDKGGSWFTTTSMFPALSTAPSTATVFSSDTIMSTVEPDTTELASLTDIPIETSSVEELLSVMSNWEPSSAPTLSIETPVSSHHSSMQHSSFESSADINTVFSSESAFETASDYIVSTPSSISHSTMVPQSSVSALSVVSESLASAEPSFVVPSESFIFSASSAAPQPSSSTYSVSFTTQFETPSSAGPSLVTSVESNTELISSATQSSDIQTEFTSTWTTTNSDGSVVTESGIISQSGTSLTTLTTFQPATSLVVPPYSVIETEFTSTWTTTNSDSSVATESGVVSQSDTLLTTVTTFPPAPSAIVPEFTSPWKINTSIESSETLTVSASSYETVGESLAAATSSYLSSATVVVAPSESEINTSSSILNNEEIASAPVSDTTSIAEHHDGSLSMTTTEFVNSNSLPSSHSIVTATITSCNKSKCSESVVTYVSSVSCATITVGDSEKNSSIVGNNISSIVGDDVSNTQAITMATSTESATTLTSVSGAKPSVANDATNSVHTTDYTTATTGVQNGSSLSIPSDIPIEISDITPTDSSSSAVTISYENGSNKESIENIKYLTLVVFGLMMFM.

The N-terminal stretch at 1 to 20 (MQLFQNILVSIALLTQVVFA) is a signal peptide. Asn36, Asn367, Asn686, Asn732, Asn790, Asn818, Asn825, Asn884, and Asn917 each carry an N-linked (GlcNAc...) asparagine glycan. The GPI-anchor amidated asparagine moiety is linked to residue Asn917. The propeptide at 918–941 (GSNKESIENIKYLTLVVFGLMMFM) is removed in mature form.

It belongs to the HYR1/IFF family. The GPI-anchor is attached to the protein in the endoplasmic reticulum and serves to target the protein to the cell surface. There, the glucosamine-inositol phospholipid moiety is cleaved off and the GPI-modified mannoprotein is covalently attached via its lipidless GPI glycan remnant to the 1,6-beta-glucan of the outer cell wall layer.

The protein resides in the secreted. Its subcellular location is the cell wall. It is found in the membrane. Functionally, GPI-anchored cell wall protein involved in cell wall organization, hyphal growth, as well as in host-fungal interaction and virulence. The polypeptide is Cell wall protein IFF3 (IFF3) (Candida albicans (strain SC5314 / ATCC MYA-2876) (Yeast)).